The sequence spans 266 residues: 22 kDa alpha-zein 4 (266 aa).

A signal peptide spans 1 to 21 (MATKILSLLALLALFASATNA).

Belongs to the zein family. Interacts with OP10 (via N-terminus). In terms of tissue distribution, expressed in endosperm, mainly in the peripheral regions.

Functionally, zeins are major seed storage proteins. The chain is 22 kDa alpha-zein 4 from Zea mays (Maize).